The primary structure comprises 443 residues: ATP-dependent protease ATPase subunit HslU (443 aa).

ATP contacts are provided by residues I18, 60–65 (GVGKTE), D256, E321, and R393.

This sequence belongs to the ClpX chaperone family. HslU subfamily. In terms of assembly, a double ring-shaped homohexamer of HslV is capped on each side by a ring-shaped HslU homohexamer. The assembly of the HslU/HslV complex is dependent on binding of ATP.

Its subcellular location is the cytoplasm. ATPase subunit of a proteasome-like degradation complex; this subunit has chaperone activity. The binding of ATP and its subsequent hydrolysis by HslU are essential for unfolding of protein substrates subsequently hydrolyzed by HslV. HslU recognizes the N-terminal part of its protein substrates and unfolds these before they are guided to HslV for hydrolysis. The sequence is that of ATP-dependent protease ATPase subunit HslU from Pectobacterium carotovorum subsp. carotovorum (strain PC1).